The following is a 413-amino-acid chain: Tyrosine--tRNA ligase (413 aa).

Y34 contacts L-tyrosine. The short motif at 39–48 is the 'HIGH' region element; that stretch reads CTAQSLHVGN. Residues Y171 and Q175 each coordinate L-tyrosine. The 'KMSKS' region signature appears at 231 to 235; that stretch reads KMGKT. K234 is an ATP binding site. The 66-residue stretch at 346–411 folds into the S4 RNA-binding domain; sequence IPITELLVTI…GKKCHILVKI (66 aa).

This sequence belongs to the class-I aminoacyl-tRNA synthetase family. TyrS type 1 subfamily. As to quaternary structure, homodimer.

The protein resides in the cytoplasm. The enzyme catalyses tRNA(Tyr) + L-tyrosine + ATP = L-tyrosyl-tRNA(Tyr) + AMP + diphosphate + H(+). Its function is as follows. Catalyzes the attachment of tyrosine to tRNA(Tyr) in a two-step reaction: tyrosine is first activated by ATP to form Tyr-AMP and then transferred to the acceptor end of tRNA(Tyr). This chain is Tyrosine--tRNA ligase, found in Orientia tsutsugamushi (strain Boryong) (Rickettsia tsutsugamushi).